The following is a 179-amino-acid chain: Protein GrpE (179 aa).

The disordered stretch occupies residues 1–45; it reads MSEEKLTQDPTAEEEQTETADQQESADVNWEQEAAHWKAQAEEHQ. The span at 33–45 shows a compositional bias: basic and acidic residues; sequence EAAHWKAQAEEHQ.

Belongs to the GrpE family. As to quaternary structure, homodimer.

It localises to the cytoplasm. Participates actively in the response to hyperosmotic and heat shock by preventing the aggregation of stress-denatured proteins, in association with DnaK and GrpE. It is the nucleotide exchange factor for DnaK and may function as a thermosensor. Unfolded proteins bind initially to DnaJ; upon interaction with the DnaJ-bound protein, DnaK hydrolyzes its bound ATP, resulting in the formation of a stable complex. GrpE releases ADP from DnaK; ATP binding to DnaK triggers the release of the substrate protein, thus completing the reaction cycle. Several rounds of ATP-dependent interactions between DnaJ, DnaK and GrpE are required for fully efficient folding. The polypeptide is Protein GrpE (Brevibacillus choshinensis).